Here is a 63-residue protein sequence, read N- to C-terminus: Large ribosomal subunit protein bL28 (63 aa).

It belongs to the bacterial ribosomal protein bL28 family.

The polypeptide is Large ribosomal subunit protein bL28 (Solibacter usitatus (strain Ellin6076)).